A 150-amino-acid polypeptide reads, in one-letter code: SsrA-binding protein (150 aa).

It belongs to the SmpB family.

The protein localises to the cytoplasm. In terms of biological role, required for rescue of stalled ribosomes mediated by trans-translation. Binds to transfer-messenger RNA (tmRNA), required for stable association of tmRNA with ribosomes. tmRNA and SmpB together mimic tRNA shape, replacing the anticodon stem-loop with SmpB. tmRNA is encoded by the ssrA gene; the 2 termini fold to resemble tRNA(Ala) and it encodes a 'tag peptide', a short internal open reading frame. During trans-translation Ala-aminoacylated tmRNA acts like a tRNA, entering the A-site of stalled ribosomes, displacing the stalled mRNA. The ribosome then switches to translate the ORF on the tmRNA; the nascent peptide is terminated with the 'tag peptide' encoded by the tmRNA and targeted for degradation. The ribosome is freed to recommence translation, which seems to be the essential function of trans-translation. The sequence is that of SsrA-binding protein from Coprothermobacter proteolyticus (strain ATCC 35245 / DSM 5265 / OCM 4 / BT).